The primary structure comprises 134 residues: Histone H2A (134 aa).

A compositionally biased stretch (gly residues) spans 1-11 (MTGGGKSGGKA). The disordered stretch occupies residues 1 to 25 (MTGGGKSGGKASGSKNAQSRSSKAG). 2 positions are modified to N6-acetyllysine: Lys6 and Lys10. Gln107 is subject to N5-methylglutamine. Phosphoserine is present on Ser131. A [ST]-Q motif motif is present at residues 131–132 (SQ).

This sequence belongs to the histone H2A family. The nucleosome is a histone octamer containing two molecules each of H2A, H2B, H3 and H4 assembled in one H3-H4 heterotetramer and two H2A-H2B heterodimers. The octamer wraps approximately 147 bp of DNA. Post-translationally, phosphorylated to form H2AS128ph (gamma-H2A) in response to DNA double-strand breaks (DSBs) generated by exogenous genotoxic agents and by stalled replication forks. Phosphorylation is dependent on the DNA damage checkpoint kinases mec-1/ATR and tel-1/ATM, spreads on either side of a detected DSB site and may mark the surrounding chromatin for recruitment of proteins required for DNA damage signaling and repair. Gamma-H2A is removed from the DNA prior to the strand invasion-primer extension step of the repair process and subsequently dephosphorylated. Dephosphorylation is necessary for efficient recovery from the DNA damage checkpoint. Acetylated by esa-1 to form H2AK4ac and H2AK7ac.

Its subcellular location is the nucleus. It localises to the chromosome. Its function is as follows. Core component of nucleosome which plays a central role in DNA double strand break (DSB) repair. Nucleosomes wrap and compact DNA into chromatin, limiting DNA accessibility to the cellular machineries which require DNA as a template. Histones thereby play a central role in transcription regulation, DNA repair, DNA replication and chromosomal stability. DNA accessibility is regulated via a complex set of post-translational modifications of histones, also called histone code, and nucleosome remodeling. The protein is Histone H2A (hh2a) of Neurospora crassa (strain ATCC 24698 / 74-OR23-1A / CBS 708.71 / DSM 1257 / FGSC 987).